Here is a 182-residue protein sequence, read N- to C-terminus: Dynactin subunit 5 (182 aa).

Met-1 carries the post-translational modification N-acetylmethionine.

Belongs to the dynactin subunits 5/6 family. Dynactin subunit 5 subfamily. As to quaternary structure, subunit of dynactin, a multiprotein complex part of a tripartite complex with dynein and a adapter, such as BICDL1, BICD2 or HOOK3. The dynactin complex is built around ACTR1A/ACTB filament and consists of an actin-related filament composed of a shoulder domain, a pointed end and a barbed end. Its length is defined by its flexible shoulder domain. The soulder is composed of 2 DCTN1 subunits, 4 DCTN2 and 2 DCTN3. The 4 DCNT2 (via N-terminus) bind the ACTR1A filament and act as molecular rulers to determine the length. The pointed end is important for binding dynein-dynactin cargo adapters. Consists of 4 subunits: ACTR10, DCNT4, DCTN5 and DCTN6. Within the complex DCTN6 forms a heterodimer with DCTN5. The barbed end is composed of a CAPZA1:CAPZB heterodimers, which binds ACTR1A/ACTB filament and dynactin and stabilizes dynactin. Interacts with N4BP2L1.

The protein resides in the cytoplasm. It localises to the cytoskeleton. It is found in the chromosome. Its subcellular location is the centromere. The protein localises to the kinetochore. In terms of biological role, part of the dynactin complex that activates the molecular motor dynein for ultra-processive transport along microtubules. The sequence is that of Dynactin subunit 5 (DCTN5) from Pongo abelii (Sumatran orangutan).